The primary structure comprises 242 residues: uncharacterized protein (242 aa).

8–15 (TGASGGIG) provides a ligand contact to NADP(+). Substrate is bound at residue Ser137. The active-site Proton acceptor is Tyr150.

This sequence belongs to the short-chain dehydrogenases/reductases (SDR) family.

This is an uncharacterized protein from Bacillus subtilis (strain 168).